Consider the following 372-residue polypeptide: MNTGLDLEVSFNHLLQDMGLSSTISHLLWLPLPMLLVLTAALIGVLVTVWLERKISAAAQQRIGPEYAGALGILQPMADGLKLLVKEDIIPDKADNLLFTLGPVLVLIPVILSWLIIPFGQNLLISNVGIGIFLWIALSSIQPIGLLMSGYASNNKYSLLGGLRAAAQSISYEIPLALAVLAIVMMSNSLSTIDIVNQQNTLGFLSWNIWRQPVGFLIFWICALAECERLPFDLPEAEEELVAGYQTEYAGMKFALFYLGSYINLVLSSLLVSVLYLGGWGFPIPVELIANTLHQSINSPVIQIITASLGIVMTVFKTYLLVFLAILLRWTTPRVRIDQLLDLGWKFLLPISLVNLLFTAALKLVFPFAFGG.

Helical transmembrane passes span 27 to 47 (LLWL…GVLV), 97 to 117 (LLFT…WLII), 128 to 148 (VGIG…GLLM), 176 to 196 (LALA…IDIV), 204 to 224 (FLSW…ICAL), 270 to 290 (LLVS…ELIA), 308 to 328 (SLGI…AILL), and 351 to 371 (ISLV…FAFG).

This sequence belongs to the complex I subunit 1 family. As to quaternary structure, NDH-1 is composed of at least 11 different subunits.

It localises to the cellular thylakoid membrane. It carries out the reaction a plastoquinone + NADH + (n+1) H(+)(in) = a plastoquinol + NAD(+) + n H(+)(out). The catalysed reaction is a plastoquinone + NADPH + (n+1) H(+)(in) = a plastoquinol + NADP(+) + n H(+)(out). NDH-1 shuttles electrons from an unknown electron donor, via FMN and iron-sulfur (Fe-S) centers, to quinones in the respiratory and/or the photosynthetic chain. The immediate electron acceptor for the enzyme in this species is believed to be plastoquinone. Couples the redox reaction to proton translocation, and thus conserves the redox energy in a proton gradient. This is NAD(P)H-quinone oxidoreductase subunit 1 from Prochlorococcus marinus (strain SARG / CCMP1375 / SS120).